We begin with the raw amino-acid sequence, 361 residues long: Probable mannitol dehydrogenase (361 aa).

Zn(2+) contacts are provided by Cys51, His73, Cys104, Cys107, Cys110, Cys118, and Cys167.

This sequence belongs to the zinc-containing alcohol dehydrogenase family. The cofactor is Zn(2+).

The catalysed reaction is D-mannitol + NAD(+) = D-mannose + NADH + H(+). Oxidizes mannitol to mannose. Provides the initial step by which translocated mannitol is committed to central metabolism and, by regulating mannitol pool size, is important in regulating salt tolerance at the cellular level. The sequence is that of Probable mannitol dehydrogenase (ELI3) from Mesembryanthemum crystallinum (Common ice plant).